A 358-amino-acid chain; its full sequence is Probable arabinan endo-1,5-alpha-L-arabinosidase B (358 aa).

The N-terminal stretch at 1-16 (MVLVATLFSLFTVSLC) is a signal peptide. The active-site Proton acceptor is the Asp39. A glycan (N-linked (GlcNAc...) asparagine) is linked at Asn194. Residues 202–227 (HLAKHPKTERVNSQDQNPDPLCRDSS) form a disordered region. Catalysis depends on Glu233, which acts as the Proton donor.

It belongs to the glycosyl hydrolase 43 family.

It is found in the secreted. The catalysed reaction is Endohydrolysis of (1-&gt;5)-alpha-arabinofuranosidic linkages in (1-&gt;5)-arabinans.. The protein operates within glycan metabolism; L-arabinan degradation. Functionally, endo-1,5-alpha-L-arabinanase involved in degradation of pectin. Its preferred substrate is linear 1,5-alpha-L-arabinan. This Aspergillus flavus (strain ATCC 200026 / FGSC A1120 / IAM 13836 / NRRL 3357 / JCM 12722 / SRRC 167) protein is Probable arabinan endo-1,5-alpha-L-arabinosidase B (abnB).